Consider the following 179-residue polypeptide: Large ribosomal subunit protein uL22c (179 aa).

This sequence belongs to the universal ribosomal protein uL22 family. As to quaternary structure, part of the 50S ribosomal subunit.

The protein resides in the plastid. It is found in the chloroplast. Functionally, this protein binds specifically to 23S rRNA. In terms of biological role, the globular domain of the protein is located near the polypeptide exit tunnel on the outside of the subunit, while an extended beta-hairpin is found that lines the wall of the exit tunnel in the center of the 70S ribosome. The polypeptide is Large ribosomal subunit protein uL22c (rpl22) (Ranunculus macranthus (Large buttercup)).